The chain runs to 51 residues: Large ribosomal subunit protein eL39 (51 aa).

A compositionally biased stretch (basic residues) spans 1-15 (MAAKKSFKIKQKLAK). Residues 1-21 (MAAKKSFKIKQKLAKAKNQNR) are disordered.

Belongs to the eukaryotic ribosomal protein eL39 family. As to quaternary structure, interacts with YIH1.

In Eremothecium gossypii (strain ATCC 10895 / CBS 109.51 / FGSC 9923 / NRRL Y-1056) (Yeast), this protein is Large ribosomal subunit protein eL39 (RPL39).